A 272-amino-acid chain; its full sequence is Glutamate racemase (272 aa).

Substrate is bound by residues 10 to 11 (DS) and 42 to 43 (YG). Catalysis depends on Cys74, which acts as the Proton donor/acceptor. 75–76 (NT) serves as a coordination point for substrate. Catalysis depends on Cys185, which acts as the Proton donor/acceptor. Residue 186 to 187 (TH) coordinates substrate.

It belongs to the aspartate/glutamate racemases family.

It carries out the reaction L-glutamate = D-glutamate. Its pathway is cell wall biogenesis; peptidoglycan biosynthesis. Functionally, provides the (R)-glutamate required for cell wall biosynthesis. This Bacillus velezensis (strain DSM 23117 / BGSC 10A6 / LMG 26770 / FZB42) (Bacillus amyloliquefaciens subsp. plantarum) protein is Glutamate racemase.